Reading from the N-terminus, the 379-residue chain is Cytochrome b (379 aa).

A run of 4 helical transmembrane segments spans residues 34-54 (FGSL…FLAM), 78-99 (WLIR…YLHI), 114-134 (WNTG…GYVL), and 179-199 (FFTF…VHLL). The heme b site is built by histidine 84 and histidine 98. Heme b is bound by residues histidine 183 and histidine 197. Histidine 202 is a binding site for a ubiquinone. Helical transmembrane passes span 227 to 247 (YKDL…TLFY), 289 to 309 (LGGV…PTLH), 321 to 341 (LTQT…WIGG), and 348 to 368 (FITI…ILMP).

Belongs to the cytochrome b family. In terms of assembly, the cytochrome bc1 complex contains 3 respiratory subunits (MT-CYB, CYC1 and UQCRFS1), 2 core proteins (UQCRC1 and UQCRC2) and probably 6 low-molecular weight proteins. Requires heme b as cofactor.

It localises to the mitochondrion inner membrane. In terms of biological role, component of the ubiquinol-cytochrome c reductase complex (complex III or cytochrome b-c1 complex) that is part of the mitochondrial respiratory chain. The b-c1 complex mediates electron transfer from ubiquinol to cytochrome c. Contributes to the generation of a proton gradient across the mitochondrial membrane that is then used for ATP synthesis. This is Cytochrome b (MT-CYB) from Glyptemys muhlenbergii (Bog turtle).